Here is a 305-residue protein sequence, read N- to C-terminus: GMP synthase [glutamine-hydrolyzing] subunit B (305 aa).

The 183-residue stretch at 2-184 folds into the GMPS ATP-PPase domain; it reads VKPEKFIPKA…LKLPDEICER (183 aa). Residue 29 to 35 coordinates ATP; the sequence is SGGVDSS.

Heterodimer composed of a glutamine amidotransferase subunit (A) and a GMP-binding subunit (B).

The enzyme catalyses XMP + L-glutamine + ATP + H2O = GMP + L-glutamate + AMP + diphosphate + 2 H(+). It functions in the pathway purine metabolism; GMP biosynthesis; GMP from XMP (L-Gln route): step 1/1. Catalyzes the synthesis of GMP from XMP. The protein is GMP synthase [glutamine-hydrolyzing] subunit B of Methanosarcina barkeri (strain Fusaro / DSM 804).